The sequence spans 164 residues: Thiol peroxidase (164 aa).

One can recognise a Thioredoxin domain in the interval 18–163 (INEGDFAPDF…FDAALAAYKN (146 aa)). C60 (cysteine sulfenic acid (-SOH) intermediate) is an active-site residue. An intrachain disulfide couples C60 to C93.

It belongs to the peroxiredoxin family. Tpx subfamily. Homodimer.

It catalyses the reaction a hydroperoxide + [thioredoxin]-dithiol = an alcohol + [thioredoxin]-disulfide + H2O. Its function is as follows. Thiol-specific peroxidase that catalyzes the reduction of hydrogen peroxide and organic hydroperoxides to water and alcohols, respectively. Plays a role in cell protection against oxidative stress by detoxifying peroxides. This is Thiol peroxidase from Staphylococcus aureus (strain MRSA252).